The sequence spans 86 residues: Cytochrome c oxidase subunit 3 (86 aa).

The Mitochondrial matrix segment spans residues 1 to 15; sequence MAHQAHSYHMVDPSP. Residues 16 to 34 form a helical membrane-spanning segment; the sequence is WPIFGAAAALLTTSGLVMW. Residues 35–40 lie on the Mitochondrial intermembrane side of the membrane; it reads FHYNSS. The helical transmembrane segment at 41–66 threads the bilayer; sequence ILLAAGLLSMLLVMLQWWREIVREST. At 67–86 the chain is on the mitochondrial matrix side; it reads FQGHHTPTVQKGLRYGMILF.

This sequence belongs to the cytochrome c oxidase subunit 3 family. As to quaternary structure, component of the cytochrome c oxidase (complex IV, CIV), a multisubunit enzyme composed of 14 subunits. The complex is composed of a catalytic core of 3 subunits MT-CO1, MT-CO2 and MT-CO3, encoded in the mitochondrial DNA, and 11 supernumerary subunits COX4I, COX5A, COX5B, COX6A, COX6B, COX6C, COX7A, COX7B, COX7C, COX8 and NDUFA4, which are encoded in the nuclear genome. The complex exists as a monomer or a dimer and forms supercomplexes (SCs) in the inner mitochondrial membrane with NADH-ubiquinone oxidoreductase (complex I, CI) and ubiquinol-cytochrome c oxidoreductase (cytochrome b-c1 complex, complex III, CIII), resulting in different assemblies (supercomplex SCI(1)III(2)IV(1) and megacomplex MCI(2)III(2)IV(2)).

It is found in the mitochondrion inner membrane. The catalysed reaction is 4 Fe(II)-[cytochrome c] + O2 + 8 H(+)(in) = 4 Fe(III)-[cytochrome c] + 2 H2O + 4 H(+)(out). Component of the cytochrome c oxidase, the last enzyme in the mitochondrial electron transport chain which drives oxidative phosphorylation. The respiratory chain contains 3 multisubunit complexes succinate dehydrogenase (complex II, CII), ubiquinol-cytochrome c oxidoreductase (cytochrome b-c1 complex, complex III, CIII) and cytochrome c oxidase (complex IV, CIV), that cooperate to transfer electrons derived from NADH and succinate to molecular oxygen, creating an electrochemical gradient over the inner membrane that drives transmembrane transport and the ATP synthase. Cytochrome c oxidase is the component of the respiratory chain that catalyzes the reduction of oxygen to water. Electrons originating from reduced cytochrome c in the intermembrane space (IMS) are transferred via the dinuclear copper A center (CU(A)) of subunit 2 and heme A of subunit 1 to the active site in subunit 1, a binuclear center (BNC) formed by heme A3 and copper B (CU(B)). The BNC reduces molecular oxygen to 2 water molecules using 4 electrons from cytochrome c in the IMS and 4 protons from the mitochondrial matrix. The protein is Cytochrome c oxidase subunit 3 (MT-CO3) of Anas platyrhynchos (Mallard).